Here is a 162-residue protein sequence, read N- to C-terminus: Beta-lactoglobulin-1 (162 aa).

Intrachain disulfides connect Cys-66-Cys-160 and Cys-106-Cys-119.

Belongs to the calycin superfamily. Lipocalin family. As to quaternary structure, monomer.

Its subcellular location is the secreted. In terms of biological role, lactoglobulin is the primary component of whey, it binds retinol and is probably involved in the transport of that molecule. This is Beta-lactoglobulin-1 (LGB1) from Felis catus (Cat).